A 336-amino-acid chain; its full sequence is NAC domain-containing protein 100 (336 aa).

The 151-residue stretch at 16–166 (LPPGFRFHPT…EWVICRVFQK (151 aa)) folds into the NAC domain. The DNA-binding element occupies 113–172 (VGMKKTLVFYRGRAPKGQKTNWVMHEYRLEGKFSAHNLPKTAKNEWVICRVFQKSAGGKK). Positions 313 to 336 (RRFDSQEDPSSSTGPVDLEPFWNY) are disordered.

It localises to the nucleus. Functionally, binds to the promoter regions of genes involved in chlorophyll catabolic processes, such as NYC1, SGR1, SGR2 and PAO. The chain is NAC domain-containing protein 100 from Arabidopsis thaliana (Mouse-ear cress).